The primary structure comprises 173 residues: Adenine phosphoribosyltransferase (173 aa).

The protein belongs to the purine/pyrimidine phosphoribosyltransferase family. As to quaternary structure, homodimer.

The protein localises to the cytoplasm. It catalyses the reaction AMP + diphosphate = 5-phospho-alpha-D-ribose 1-diphosphate + adenine. It participates in purine metabolism; AMP biosynthesis via salvage pathway; AMP from adenine: step 1/1. Its function is as follows. Catalyzes a salvage reaction resulting in the formation of AMP, that is energically less costly than de novo synthesis. This Listeria monocytogenes serovar 1/2a (strain ATCC BAA-679 / EGD-e) protein is Adenine phosphoribosyltransferase.